Consider the following 181-residue polypeptide: Large ribosomal subunit protein uL10 (181 aa).

The protein belongs to the universal ribosomal protein uL10 family. Part of the ribosomal stalk of the 50S ribosomal subunit. The N-terminus interacts with L11 and the large rRNA to form the base of the stalk. The C-terminus forms an elongated spine to which L12 dimers bind in a sequential fashion forming a multimeric L10(L12)X complex.

Its function is as follows. Forms part of the ribosomal stalk, playing a central role in the interaction of the ribosome with GTP-bound translation factors. The sequence is that of Large ribosomal subunit protein uL10 from Acidobacterium capsulatum (strain ATCC 51196 / DSM 11244 / BCRC 80197 / JCM 7670 / NBRC 15755 / NCIMB 13165 / 161).